A 466-amino-acid polypeptide reads, in one-letter code: Cysteine--tRNA ligase (466 aa).

Cys29 lines the Zn(2+) pocket. The 'HIGH' region signature appears at 31-41 (PTVYNYIHIGN). The Zn(2+) site is built by Cys209, His234, and Glu238. Residues 266–270 (KMSKS) carry the 'KMSKS' region motif. Residue Lys269 participates in ATP binding.

The protein belongs to the class-I aminoacyl-tRNA synthetase family. In terms of assembly, monomer. Requires Zn(2+) as cofactor.

It localises to the cytoplasm. It carries out the reaction tRNA(Cys) + L-cysteine + ATP = L-cysteinyl-tRNA(Cys) + AMP + diphosphate. This is Cysteine--tRNA ligase from Lysinibacillus sphaericus (strain C3-41).